The chain runs to 234 residues: Glycerol uptake facilitator protein (234 aa).

6 helical membrane-spanning segments follow: residues 9–29 (FLGTLILILLGNGVVAGVVLP), 37–57 (GWIVITMGWGIAVAVAVFVSG), 61–81 (PAYLNPAVTIGVALKGGLPWA), 83–103 (VLPYILAQFAGAMLGQILVWL), 135–155 (LISEILGTFVLVLTIFALGLY), and 159–179 (AGIGTFAVGTLIVGIGLSLGG). An NPA 1 motif is present at residues 65 to 67 (NPA). Residues 186-188 (NPA) carry the NPA 2 motif. The chain crosses the membrane as a helical span at residues 214 to 234 (WIPVVGPVIGAALAVLVFSLF).

It belongs to the MIP/aquaporin (TC 1.A.8) family.

The protein resides in the cell membrane. The catalysed reaction is glycerol(in) = glycerol(out). Its function is as follows. Mediates glycerol diffusion across the cytoplasmic membrane via a pore-type mechanism. The sequence is that of Glycerol uptake facilitator protein (glpF) from Streptococcus pneumoniae serotype 4 (strain ATCC BAA-334 / TIGR4).